Reading from the N-terminus, the 203-residue chain is Imidazole glycerol phosphate synthase subunit HisH 1 (203 aa).

Residues 1–203 form the Glutamine amidotransferase type-1 domain; it reads MIAIIDYNAG…KMIENFVELI (203 aa). The Nucleophile role is filled by cysteine 82. Residues histidine 184 and glutamate 186 contribute to the active site.

Heterodimer of HisH and HisF.

Its subcellular location is the cytoplasm. The catalysed reaction is 5-[(5-phospho-1-deoxy-D-ribulos-1-ylimino)methylamino]-1-(5-phospho-beta-D-ribosyl)imidazole-4-carboxamide + L-glutamine = D-erythro-1-(imidazol-4-yl)glycerol 3-phosphate + 5-amino-1-(5-phospho-beta-D-ribosyl)imidazole-4-carboxamide + L-glutamate + H(+). The enzyme catalyses L-glutamine + H2O = L-glutamate + NH4(+). Its pathway is amino-acid biosynthesis; L-histidine biosynthesis; L-histidine from 5-phospho-alpha-D-ribose 1-diphosphate: step 5/9. Its function is as follows. IGPS catalyzes the conversion of PRFAR and glutamine to IGP, AICAR and glutamate. The HisH subunit provides the glutamine amidotransferase activity that produces the ammonia necessary to HisF for the synthesis of IGP and AICAR. This Methanococcus maripaludis (strain DSM 14266 / JCM 13030 / NBRC 101832 / S2 / LL) protein is Imidazole glycerol phosphate synthase subunit HisH 1 (hisH1).